The following is a 417-amino-acid chain: Tyrosine--tRNA ligase (417 aa).

An L-tyrosine-binding site is contributed by Y40. The short motif at 45-54 is the 'HIGH' region element; sequence ATAASLHVGH. L-tyrosine-binding residues include Y177 and Q181. The 'KMSKS' region signature appears at 237–241; it reads KMGKS. Residue K240 participates in ATP binding. Positions 351 to 414 constitute an S4 RNA-binding domain; that stretch reads ISVVQLITRS…AGRKRHALIK (64 aa).

This sequence belongs to the class-I aminoacyl-tRNA synthetase family. TyrS type 1 subfamily. Homodimer.

It localises to the cytoplasm. It catalyses the reaction tRNA(Tyr) + L-tyrosine + ATP = L-tyrosyl-tRNA(Tyr) + AMP + diphosphate + H(+). In terms of biological role, catalyzes the attachment of tyrosine to tRNA(Tyr) in a two-step reaction: tyrosine is first activated by ATP to form Tyr-AMP and then transferred to the acceptor end of tRNA(Tyr). The sequence is that of Tyrosine--tRNA ligase from Dinoroseobacter shibae (strain DSM 16493 / NCIMB 14021 / DFL 12).